A 584-amino-acid chain; its full sequence is A-type ATP synthase subunit A (584 aa).

234–241 (GPFGSGKT) provides a ligand contact to ATP.

It belongs to the ATPase alpha/beta chains family. In terms of assembly, has multiple subunits with at least A(3), B(3), C, D, E, F, H, I and proteolipid K(x).

The protein resides in the cell membrane. It catalyses the reaction ATP + H2O + 4 H(+)(in) = ADP + phosphate + 5 H(+)(out). In terms of biological role, component of the A-type ATP synthase that produces ATP from ADP in the presence of a proton gradient across the membrane. The A chain is the catalytic subunit. This is A-type ATP synthase subunit A from Methanoculleus marisnigri (strain ATCC 35101 / DSM 1498 / JR1).